Reading from the N-terminus, the 161-residue chain is Phosphopantetheine adenylyltransferase (161 aa).

T9 contacts substrate. ATP is bound by residues 9-10 (TF) and H17. Residues K41, L73, and R87 each coordinate substrate. ATP is bound by residues 88 to 90 (GMR), E98, and 123 to 129 (WSYVSST).

It belongs to the bacterial CoaD family. As to quaternary structure, homohexamer. Mg(2+) is required as a cofactor.

Its subcellular location is the cytoplasm. The catalysed reaction is (R)-4'-phosphopantetheine + ATP + H(+) = 3'-dephospho-CoA + diphosphate. The protein operates within cofactor biosynthesis; coenzyme A biosynthesis; CoA from (R)-pantothenate: step 4/5. Its function is as follows. Reversibly transfers an adenylyl group from ATP to 4'-phosphopantetheine, yielding dephospho-CoA (dPCoA) and pyrophosphate. This chain is Phosphopantetheine adenylyltransferase, found in Actinobacillus succinogenes (strain ATCC 55618 / DSM 22257 / CCUG 43843 / 130Z).